The chain runs to 236 residues: Small ribosomal subunit protein uS2c (236 aa).

This sequence belongs to the universal ribosomal protein uS2 family.

The protein localises to the plastid. It localises to the chloroplast. The polypeptide is Small ribosomal subunit protein uS2c (rps2) (Lactuca sativa (Garden lettuce)).